A 172-amino-acid chain; its full sequence is Gastrula zinc finger protein XlCGF51.1A (172 aa).

6 C2H2-type zinc fingers span residues 6-28 (FSCS…NKIH), 34-56 (LICS…QRSH), 62-84 (FSCT…QRTH), 90-112 (FSCT…MLKH), 122-144 (LDCS…RKSH), and 150-172 (LQCS…QRVH).

This sequence belongs to the krueppel C2H2-type zinc-finger protein family.

It is found in the nucleus. Functionally, may be involved in transcriptional regulation. The polypeptide is Gastrula zinc finger protein XlCGF51.1A (Xenopus laevis (African clawed frog)).